The sequence spans 471 residues: Cytolysin (471 aa).

The signal sequence occupies residues 1-20; it reads MKKMTLFTLSLLATAVQVGA. The 128-residue stretch at 338 to 465 folds into the Ricin B-type lectin domain; sequence AHVTLQSLSN…EANQARWKPT (128 aa).

It belongs to the HlyA hemolysin family.

Bacterial hemolysins are exotoxins that attack blood cell membranes and cause cell rupture by mechanisms not clearly defined. This Vibrio vulnificus (strain CMCP6) protein is Cytolysin (vvhA).